The following is a 400-amino-acid chain: MTTFGTIEQAMAEILAGRPVVVVDDANRENEGDLIFAAELATPELVAFMVRYTSGYICASLTEDDCDRLDLPPMHHTNQDRRGTAYMVTVDARKGVSTGISAADRARVIRLLADPSTTPDDLARPGHVVPLRAREGGVLRRTGHTEAATDLTRLAGLRPAGVLCELVNDDGTMMRVPDLERFCAEHSLVLVTIADLVMYRRRTEKQVELVAEARLPTRHGDFRVAGYRGDYDSAEHVALVMGDLGDGRDVLVRAHSECLTGDVFGSLRCDCGLQLDTAMELVAKEGRGVVLYIRGHEGRGIGLLHKLRAYQLQDKGRDTVEANLELGLPVDARDYGTGAQVLYDLGVRSMRLLTNNPAKRAGLEGYGLTVTERVALPVQSHPENERYLRTKRDRMGHLLG.

A DHBP synthase region spans residues Met1–Arg202. D-ribulose 5-phosphate-binding positions include Arg28–Glu29, Asp33, Arg141–Thr145, and Glu165. Residue Glu29 coordinates Mg(2+). His144 provides a ligand contact to Mg(2+). Positions Thr203–Gly400 are GTP cyclohydrolase II. Arg253–Glu257 contacts GTP. Zn(2+)-binding residues include Cys258, Cys269, and Cys271. GTP contacts are provided by residues Gln274, Glu297–Arg299, and Thr319. The active-site Proton acceptor; for GTP cyclohydrolase activity is Asp331. Arg333 functions as the Nucleophile; for GTP cyclohydrolase activity in the catalytic mechanism. 2 residues coordinate GTP: Thr354 and Lys359.

The protein in the N-terminal section; belongs to the DHBP synthase family. It in the C-terminal section; belongs to the GTP cyclohydrolase II family. Mg(2+) is required as a cofactor. It depends on Mn(2+) as a cofactor. The cofactor is Zn(2+).

The catalysed reaction is D-ribulose 5-phosphate = (2S)-2-hydroxy-3-oxobutyl phosphate + formate + H(+). It catalyses the reaction GTP + 4 H2O = 2,5-diamino-6-hydroxy-4-(5-phosphoribosylamino)-pyrimidine + formate + 2 phosphate + 3 H(+). Its pathway is cofactor biosynthesis; riboflavin biosynthesis; 2-hydroxy-3-oxobutyl phosphate from D-ribulose 5-phosphate: step 1/1. It participates in cofactor biosynthesis; riboflavin biosynthesis; 5-amino-6-(D-ribitylamino)uracil from GTP: step 1/4. Catalyzes the conversion of D-ribulose 5-phosphate to formate and 3,4-dihydroxy-2-butanone 4-phosphate. Its function is as follows. Catalyzes the conversion of GTP to 2,5-diamino-6-ribosylamino-4(3H)-pyrimidinone 5'-phosphate (DARP), formate and pyrophosphate. This chain is Riboflavin biosynthesis protein RibBA, found in Salinispora tropica (strain ATCC BAA-916 / DSM 44818 / JCM 13857 / NBRC 105044 / CNB-440).